The primary structure comprises 1039 residues: Beta-galactosidase (1039 aa).

Asn-103 and Asp-201 together coordinate substrate. A Na(+)-binding site is contributed by Asp-201. The Mg(2+) site is built by Glu-415, His-417, and Glu-460. Substrate contacts are provided by residues Glu-460 and Glu-536–His-539. The active-site Proton donor is Glu-460. Catalysis depends on Glu-536, which acts as the Nucleophile. Residue Asn-596 participates in Mg(2+) binding. Positions 600 and 603 each coordinate Na(+). Residues Asn-603 and Trp-1012 each coordinate substrate.

It belongs to the glycosyl hydrolase 2 family. As to quaternary structure, homotetramer. Mg(2+) serves as cofactor. The cofactor is Na(+).

It carries out the reaction Hydrolysis of terminal non-reducing beta-D-galactose residues in beta-D-galactosides.. Inhibited by zinc, copper and nickel ions. Activated by 2-mercaptoethanol and inhibited by EDTA in vitro. The chain is Beta-galactosidase (lacZ) from Pseudoalteromonas haloplanktis (Alteromonas haloplanktis).